Here is a 657-residue protein sequence, read N- to C-terminus: Matrix metalloproteinase-15 (657 aa).

The first 36 residues, M1–G36, serve as a signal peptide directing secretion. The propeptide occupies H37–R127. The short motif at P105–Q112 is the Cysteine switch element. C107 provides a ligand contact to Zn(2+). Topologically, residues Y128–V614 are extracellular. N146 carries an N-linked (GlcNAc...) asparagine glycan. H255 is a binding site for Zn(2+). Residue E256 is part of the active site. Zn(2+) contacts are provided by H259 and H265. The segment at I295–I365 is disordered. Pro residues predominate over residues P328–G337. Hemopexin repeat units follow at residues P363–L411, P412–I457, Y459–P507, and T508–C555. The cysteines at positions 366 and 555 are disulfide-linked. N-linked (GlcNAc...) asparagine glycosylation is present at N414. A disordered region spans residues P561–S599. Over residues G585 to S599 the composition is skewed to basic and acidic residues. A helical transmembrane segment spans residues V615–V635. Over Q636–V657 the chain is Cytoplasmic.

The protein belongs to the peptidase M10A family. Zn(2+) serves as cofactor. Ca(2+) is required as a cofactor. In terms of processing, the precursor is cleaved by a furin endopeptidase.

The protein localises to the membrane. Endopeptidase that degrades various components of the extracellular matrix. May activate progelatinase A. The protein is Matrix metalloproteinase-15 (Mmp15) of Mus musculus (Mouse).